Here is a 127-residue protein sequence, read N- to C-terminus: Holo-[acyl-carrier-protein] synthase (127 aa).

Residues Asp8 and Glu56 each coordinate Mg(2+).

This sequence belongs to the P-Pant transferase superfamily. AcpS family. Mg(2+) is required as a cofactor.

It localises to the cytoplasm. The catalysed reaction is apo-[ACP] + CoA = holo-[ACP] + adenosine 3',5'-bisphosphate + H(+). Its function is as follows. Transfers the 4'-phosphopantetheine moiety from coenzyme A to a Ser of acyl-carrier-protein. In Caldanaerobacter subterraneus subsp. tengcongensis (strain DSM 15242 / JCM 11007 / NBRC 100824 / MB4) (Thermoanaerobacter tengcongensis), this protein is Holo-[acyl-carrier-protein] synthase.